A 269-amino-acid chain; its full sequence is Ubiquinone/menaquinone biosynthesis C-methyltransferase UbiE (269 aa).

Residues Thr-92, Asp-113, and 141-142 (NA) contribute to the S-adenosyl-L-methionine site.

This sequence belongs to the class I-like SAM-binding methyltransferase superfamily. MenG/UbiE family.

It carries out the reaction a 2-demethylmenaquinol + S-adenosyl-L-methionine = a menaquinol + S-adenosyl-L-homocysteine + H(+). The enzyme catalyses a 2-methoxy-6-(all-trans-polyprenyl)benzene-1,4-diol + S-adenosyl-L-methionine = a 5-methoxy-2-methyl-3-(all-trans-polyprenyl)benzene-1,4-diol + S-adenosyl-L-homocysteine + H(+). Its pathway is quinol/quinone metabolism; menaquinone biosynthesis; menaquinol from 1,4-dihydroxy-2-naphthoate: step 2/2. It participates in cofactor biosynthesis; ubiquinone biosynthesis. Methyltransferase required for the conversion of demethylmenaquinol (DMKH2) to menaquinol (MKH2) and the conversion of 2-polyprenyl-6-methoxy-1,4-benzoquinol (DDMQH2) to 2-polyprenyl-3-methyl-6-methoxy-1,4-benzoquinol (DMQH2). This chain is Ubiquinone/menaquinone biosynthesis C-methyltransferase UbiE, found in Brucella canis (strain ATCC 23365 / NCTC 10854 / RM-666).